A 356-amino-acid polypeptide reads, in one-letter code: NADH-quinone oxidoreductase subunit H (356 aa).

A run of 9 helical transmembrane segments spans residues 17–37 (TGGI…LLLA), 51–71 (PNVV…KFVL), 83–103 (VVFI…WAVV), 116–136 (VGIL…IMGG), 162–182 (IGLI…STIV), 202–222 (LVLL…ALAE), 261–281 (IVLM…PGFP), 295–315 (LFLA…FAMA), and 334–354 (VFLP…VFGP).

It belongs to the complex I subunit 1 family. As to quaternary structure, NDH-1 is composed of 14 different subunits. Subunits NuoA, H, J, K, L, M, N constitute the membrane sector of the complex.

The protein resides in the cell inner membrane. The catalysed reaction is a quinone + NADH + 5 H(+)(in) = a quinol + NAD(+) + 4 H(+)(out). Functionally, NDH-1 shuttles electrons from NADH, via FMN and iron-sulfur (Fe-S) centers, to quinones in the respiratory chain. The immediate electron acceptor for the enzyme in this species is believed to be ubiquinone. Couples the redox reaction to proton translocation (for every two electrons transferred, four hydrogen ions are translocated across the cytoplasmic membrane), and thus conserves the redox energy in a proton gradient. This subunit may bind ubiquinone. This Caulobacter vibrioides (strain ATCC 19089 / CIP 103742 / CB 15) (Caulobacter crescentus) protein is NADH-quinone oxidoreductase subunit H.